A 620-amino-acid polypeptide reads, in one-letter code: MEKFAPVAALLLLLLCFPVAFSGHDYGQALSKSLLFFEAQRSGVLPRNQRVTWRSHSGLTDGKSSGVNLVGGYYDAGDNVKFGLPMAFTVTMMAWSVIEYGNQLQANGELGNSIDAIKWGTDYFIKAHPEPNVLYGEVGDGNTDHYCWQRPEEMTTDRKAYRIDPSNPGSDLAGETAAAMAAASIVFRRSNPVYSRLLLTHAYQLFDFADKYRGKYDSSITVAQKYYRSVSGYNDELLWAAAWLYQASNNQFYLDYLGRNGDAMGGTGWSMTEFGWDVKYAGVQTLVAKFLMQGKAGRHAPVFRKYQEKADSFMCSLLGKSSRNIQKTPGGLIFRQRWNNMQFVTSASFLTTVYSDYLTSSRSNLRCAAGNVAPSQLLSFAKSQVDYILGDNPRATSYMVGYGNNFPQRVHHRGSSIVSVKVDRTFVTCRGGYATWFSRKGSDPNLLTGAIVGGPDAYDNFADRRDNYEQTEPATYNNAPLLGVLARLSSGHSGYSQFLPVVPAPVVRRPMPIRRPKVTTPVRASGPVAIVQKITSSWVSKGRTYYRYSTTVINKSSRPLKSLNLSIKNLYGPIWGLSRSGNSFGLPSWMHSLPSGKSLEFVYIHSTTPANVAVSSYTLA.

A signal peptide spans 1–22 (MEKFAPVAALLLLLLCFPVAFS). D78 acts as the Nucleophile in catalysis. Catalysis depends on residues H411, D463, and E472. N554 and N564 each carry an N-linked (GlcNAc...) asparagine glycan.

It belongs to the glycosyl hydrolase 9 (cellulase E) family.

Its subcellular location is the secreted. The enzyme catalyses Endohydrolysis of (1-&gt;4)-beta-D-glucosidic linkages in cellulose, lichenin and cereal beta-D-glucans.. The sequence is that of Endoglucanase 6 from Arabidopsis thaliana (Mouse-ear cress).